A 222-amino-acid polypeptide reads, in one-letter code: Peroxiredoxin (222 aa).

The Thioredoxin domain maps to 7 to 163 (PRLGEPAPAF…VIRLVDALQT (157 aa)). The Cysteine sulfenic acid (-SOH) intermediate role is filled by Cys-49. Residue Arg-126 participates in substrate binding. Cys-212 and Cys-218 are disulfide-bonded.

This sequence belongs to the peroxiredoxin family. Prx6 subfamily. As to quaternary structure, homodecamer. Pentamer of dimers that assemble into a ring structure.

Its subcellular location is the cytoplasm. It catalyses the reaction a hydroperoxide + [thioredoxin]-dithiol = an alcohol + [thioredoxin]-disulfide + H2O. Functionally, thiol-specific peroxidase that catalyzes the reduction of hydrogen peroxide and organic hydroperoxides to water and alcohols, respectively. Plays a role in cell protection against oxidative stress by detoxifying peroxides. This Aquifex aeolicus (strain VF5) protein is Peroxiredoxin.